The sequence spans 474 residues: Bifunctional protein HldE (474 aa).

Residues 1 to 321 are ribokinase; it reads MILSSSLRPT…EYLHSSHQGE (321 aa). 198-201 is a binding site for ATP; it reads NKKE. Residue D266 is part of the active site. A cytidylyltransferase region spans residues 348 to 474; the sequence is FTNGCFDILH…SAVVKKIQGS (127 aa).

It in the N-terminal section; belongs to the carbohydrate kinase PfkB family. In the C-terminal section; belongs to the cytidylyltransferase family. Homodimer.

It catalyses the reaction D-glycero-beta-D-manno-heptose 7-phosphate + ATP = D-glycero-beta-D-manno-heptose 1,7-bisphosphate + ADP + H(+). The catalysed reaction is D-glycero-beta-D-manno-heptose 1-phosphate + ATP + H(+) = ADP-D-glycero-beta-D-manno-heptose + diphosphate. It participates in nucleotide-sugar biosynthesis; ADP-L-glycero-beta-D-manno-heptose biosynthesis; ADP-L-glycero-beta-D-manno-heptose from D-glycero-beta-D-manno-heptose 7-phosphate: step 1/4. The protein operates within nucleotide-sugar biosynthesis; ADP-L-glycero-beta-D-manno-heptose biosynthesis; ADP-L-glycero-beta-D-manno-heptose from D-glycero-beta-D-manno-heptose 7-phosphate: step 3/4. Functionally, catalyzes the phosphorylation of D-glycero-D-manno-heptose 7-phosphate at the C-1 position to selectively form D-glycero-beta-D-manno-heptose-1,7-bisphosphate. Catalyzes the ADP transfer from ATP to D-glycero-beta-D-manno-heptose 1-phosphate, yielding ADP-D-glycero-beta-D-manno-heptose. The chain is Bifunctional protein HldE from Wolinella succinogenes (strain ATCC 29543 / DSM 1740 / CCUG 13145 / JCM 31913 / LMG 7466 / NCTC 11488 / FDC 602W) (Vibrio succinogenes).